Consider the following 209-residue polypeptide: Redox-sensing transcriptional repressor Rex (209 aa).

Positions 16-55 (LYYRFIQNLSLSGKQRVSSAELSEAVKVDSATIRRDFSYF) form a DNA-binding region, H-T-H motif. An NAD(+)-binding site is contributed by 90-95 (GVGNLG).

The protein belongs to the transcriptional regulatory Rex family. In terms of assembly, homodimer.

It is found in the cytoplasm. Its function is as follows. Modulates transcription in response to changes in cellular NADH/NAD(+) redox state. In Bacillus cereus (strain AH187), this protein is Redox-sensing transcriptional repressor Rex.